The sequence spans 140 residues: Nucleoside diphosphate kinase (140 aa).

ATP-binding residues include Lys11, Phe59, Arg87, Thr93, Arg104, and Asn114. Residue His117 is the Pros-phosphohistidine intermediate of the active site.

It belongs to the NDK family. In terms of assembly, homotetramer. Mg(2+) serves as cofactor.

Its subcellular location is the cytoplasm. It carries out the reaction a 2'-deoxyribonucleoside 5'-diphosphate + ATP = a 2'-deoxyribonucleoside 5'-triphosphate + ADP. The enzyme catalyses a ribonucleoside 5'-diphosphate + ATP = a ribonucleoside 5'-triphosphate + ADP. In terms of biological role, major role in the synthesis of nucleoside triphosphates other than ATP. The ATP gamma phosphate is transferred to the NDP beta phosphate via a ping-pong mechanism, using a phosphorylated active-site intermediate. This Nitrobacter hamburgensis (strain DSM 10229 / NCIMB 13809 / X14) protein is Nucleoside diphosphate kinase.